A 126-amino-acid polypeptide reads, in one-letter code: Glycine--tRNA ligase beta subunit (126 aa).

The protein belongs to the class-II aminoacyl-tRNA synthetase family. In terms of assembly, tetramer of two alpha and two beta subunits.

The protein localises to the cytoplasm. The catalysed reaction is tRNA(Gly) + glycine + ATP = glycyl-tRNA(Gly) + AMP + diphosphate. In Neisseria gonorrhoeae, this protein is Glycine--tRNA ligase beta subunit (glyS).